The primary structure comprises 331 residues: MLEKYYDKDADMSAISSKTIAVIGYGSQGRGQALNLKDSGLKVIIGLRPGKSWDLAKSEGFEVMDVANAAKKADIIQILIPDEQQGAVYKTQIAQGLTKGKTLMFSHGFNIHFGQIVPPADVDVIMVAPKGPGHMVRRTYTEGKGVPALIAIHQDVSGNGKKTALAYAKGIGATRAVVFETSFREETETDLFGEQAVLCGGMTSLIKAGFETLVEAGYAPEMAYLEVLHETKLIVDLIYEGGFTKMRNSISNTAQFGDLTRGPRVIGQESYLAMQEILEEIQTGAFAKEWMLENMVNRPVFNALTRADEEHLIEEVGKEIRATMPQFKDLK.

The 180-residue stretch at 2 to 181 folds into the KARI N-terminal Rossmann domain; it reads LEKYYDKDAD…GATRAVVFET (180 aa). NADP(+) is bound by residues 25–28, Arg48, Ser52, and 82–85; these read YGSQ and DEQQ. His107 is a catalytic residue. Gly133 serves as a coordination point for NADP(+). Residues 182 to 327 form the KARI C-terminal knotted domain; it reads SFREETETDL…KEIRATMPQF (146 aa). Residues Asp190, Glu194, Glu226, and Glu230 each coordinate Mg(2+). Substrate is bound at residue Ser251.

The protein belongs to the ketol-acid reductoisomerase family. It depends on Mg(2+) as a cofactor.

It catalyses the reaction (2R)-2,3-dihydroxy-3-methylbutanoate + NADP(+) = (2S)-2-acetolactate + NADPH + H(+). It carries out the reaction (2R,3R)-2,3-dihydroxy-3-methylpentanoate + NADP(+) = (S)-2-ethyl-2-hydroxy-3-oxobutanoate + NADPH + H(+). The protein operates within amino-acid biosynthesis; L-isoleucine biosynthesis; L-isoleucine from 2-oxobutanoate: step 2/4. It functions in the pathway amino-acid biosynthesis; L-valine biosynthesis; L-valine from pyruvate: step 2/4. Involved in the biosynthesis of branched-chain amino acids (BCAA). Catalyzes an alkyl-migration followed by a ketol-acid reduction of (S)-2-acetolactate (S2AL) to yield (R)-2,3-dihydroxy-isovalerate. In the isomerase reaction, S2AL is rearranged via a Mg-dependent methyl migration to produce 3-hydroxy-3-methyl-2-ketobutyrate (HMKB). In the reductase reaction, this 2-ketoacid undergoes a metal-dependent reduction by NADPH to yield (R)-2,3-dihydroxy-isovalerate. The sequence is that of Ketol-acid reductoisomerase (NADP(+)) from Methanospirillum hungatei JF-1 (strain ATCC 27890 / DSM 864 / NBRC 100397 / JF-1).